The sequence spans 562 residues: Solute carrier family 40 member 1 (562 aa).

Topologically, residues 1–20 are cytoplasmic; that stretch reads MDSPASKKPRCERFREFFKS. A helical transmembrane segment spans residues 21–50; sequence AKFLIYVGHALSTWGDRMWNFAVAVFLVEL. A Fe cation-binding site is contributed by aspartate 36. Over 51–54 the chain is Extracellular; that stretch reads YGNS. Residues 55–81 form a helical membrane-spanning segment; it reads LLLTAVYGLVVAGSVLLLGAIIGDWVD. At 82–84 the chain is on the cytoplasmic side; that stretch reads KNP. The chain crosses the membrane as a helical span at residues 85–115; it reads RLKVAQTSLVVQNSAVILCGALLMAVFQFKQ. Topologically, residues 116 to 123 are extracellular; sequence QLSSMYDG. A helical transmembrane segment spans residues 124-159; the sequence is WLLTTCYIMVISIANIANLASTAMSITIQRDWVVVV. Residues 160-161 lie on the Cytoplasmic side of the membrane; sequence AG. A helical transmembrane segment spans residues 162 to 192; that stretch reads DDRSKLADMNATVRIIDQLTNILAPMLVGQI. The Extracellular portion of the chain corresponds to 193 to 199; sequence MAFGSHF. Residues 200 to 226 traverse the membrane as a helical segment; that stretch reads IGCGFISGWNLFSMCLEYFLLWKVYQK. Residues 227–300 lie on the Cytoplasmic side of the membrane; the sequence is TPALAFKAGQ…DGWVAYYNQS (74 aa). The chain crosses the membrane as a helical span at residues 301 to 327; sequence IFFAGMSLAFLYMTVLGFDCITTGYAY. Position 320 (cysteine 320) interacts with Fe cation. The Extracellular segment spans residues 328–332; that stretch reads TQGLN. A helical membrane pass occupies residues 333–360; sequence GSVLSLLMGASAVSGICGTVAFTWIRKK. Topologically, residues 361–362 are cytoplasmic; the sequence is CG. The chain crosses the membrane as a helical span at residues 363–385; that stretch reads LIRTGFIAGVTQLSCLTLCVASV. Topologically, residues 386–444 are extracellular; that stretch reads FAPGSPFDLSVSPFEEVLRHLFGDSGSLRESPTFIPTTEPPIQANVTVFEEAPPVESYM. Residues 445–474 traverse the membrane as a helical segment; that stretch reads SVGLLFAGVIAARVGLWSFDLTVTQLIQEN. Residues 475–479 lie on the Cytoplasmic side of the membrane; it reads VIESE. A helical membrane pass occupies residues 480–504; that stretch reads RGVINGVQNSMNYLLDLLHFIMVIL. Histidine 498 is a binding site for Fe cation. At 505–507 the chain is on the extracellular side; it reads APN. The chain crosses the membrane as a helical span at residues 508–533; sequence PEAFGLLVIISVSFVAMGHMMYFRFA. The Cytoplasmic segment spans residues 534–562; the sequence is YKSLGSRLFLFCSPEQKPDPNIPSLPNSV.

This sequence belongs to the ferroportin (FP) (TC 2.A.100) family. SLC40A subfamily. In terms of tissue distribution, expressed in the yolk sac and placenta.

It localises to the cell membrane. The protein resides in the basolateral cell membrane. It catalyses the reaction Fe(2+)(in) = Fe(2+)(out). In terms of biological role, transports Fe(2+) from the inside of a cell to the outside of the cell, playing a key role for maintaining systemic iron homeostasis. May be involved in transfer of Fe(2+) between maternal and fetal circulation. This chain is Solute carrier family 40 member 1 (slc40a1), found in Danio rerio (Zebrafish).